A 262-amino-acid polypeptide reads, in one-letter code: Hydroxyethylthiazole kinase (262 aa).

A substrate-binding site is contributed by Met-50. Residues Arg-125 and Thr-171 each coordinate ATP. Gly-198 contributes to the substrate binding site.

Belongs to the Thz kinase family. It depends on Mg(2+) as a cofactor.

It carries out the reaction 5-(2-hydroxyethyl)-4-methylthiazole + ATP = 4-methyl-5-(2-phosphooxyethyl)-thiazole + ADP + H(+). It functions in the pathway cofactor biosynthesis; thiamine diphosphate biosynthesis; 4-methyl-5-(2-phosphoethyl)-thiazole from 5-(2-hydroxyethyl)-4-methylthiazole: step 1/1. Its function is as follows. Catalyzes the phosphorylation of the hydroxyl group of 4-methyl-5-beta-hydroxyethylthiazole (THZ). The sequence is that of Hydroxyethylthiazole kinase from Escherichia coli O157:H7.